Consider the following 49-residue polypeptide: MKKKTSLACSECGSRNYTVNVSGTQKETRLEVKKFCRHCNKHTLHRETK.

This sequence belongs to the bacterial ribosomal protein bL33 family.

In Listeria innocua serovar 6a (strain ATCC BAA-680 / CLIP 11262), this protein is Large ribosomal subunit protein bL33B (rpmG2).